The primary structure comprises 371 residues: Neuropeptide Y receptor type 6 (371 aa).

Residues 1–31 (MEVLTNQPTPNKTSGKSNNSAFFYFESCQPP) are Extracellular-facing. 2 N-linked (GlcNAc...) asparagine glycosylation sites follow: N11 and N18. The chain crosses the membrane as a helical span at residues 32-52 (FLAILLLLIAYTVILIMGIFG). The Cytoplasmic portion of the chain corresponds to 53 to 82 (NLSLIIIIFKKQREAQNVTNILIANLSLSD). Residues 83–103 (ILVCVMCIPFTVIYTLMDHWV) traverse the membrane as a helical segment. The Extracellular portion of the chain corresponds to 104–111 (FGNTMCKL). The cysteines at positions 109 and 196 are disulfide-linked. The helical transmembrane segment at 112 to 132 (TSYVQSVSVSVSIFSLVLIAI) threads the bilayer. Over 133–150 (ERYQLIVNPRGWKPRVAH) the chain is Cytoplasmic. Residues 151 to 171 (AYWGIILIWLISLTLSIPLFL) form a helical membrane-spanning segment. Topologically, residues 172 to 206 (SYHLTNEPFHNLSLPTDIYTHQVACVEIWPSKLNQ) are extracellular. N-linked (GlcNAc...) asparagine glycosylation is present at N182. Residues 207 to 227 (LLFSTSLFMLQYFVPLGFILI) form a helical membrane-spanning segment. Residues 228-263 (CYLKIVLCLRKRTRQVDRRKENKSRLNENKRVNVML) are Cytoplasmic-facing. Residues 264–284 (ISIVVTFGACWLPLNIFNVIF) traverse the membrane as a helical segment. The Extracellular segment spans residues 285–297 (DWYHEMLMSCHHD). A helical transmembrane segment spans residues 298-318 (LVFVVCHLIAMVSTCINPLFY). Over 319 to 371 (GFLNKNFQKDLMMLIHHCWCGEPQESYENIAMSTMHTDESKGSLKLAHIPTGI) the chain is Cytoplasmic. C336 is lipidated: S-palmitoyl cysteine.

Belongs to the G-protein coupled receptor 1 family. Kidney and discrete regions of the hypothalamus including the suprachiasmatic nucleus, anterior hypothalamus, bed nucleus stria terminalis, and the ventromedial nucleus.

Its subcellular location is the cell membrane. In terms of biological role, receptor for neuropeptide Y and peptide YY. The rank order of affinity of this receptor for pancreatic polypeptides is NPY = PYY &gt;= NPY (2-36) = [Leu-31, Pro-34] NPY &gt; NPY (13-36) &gt; PP. The activity of this receptor is mediated by G proteins that inhibits adenylate cyclase activity. In Mus musculus (Mouse), this protein is Neuropeptide Y receptor type 6 (Npy6r).